We begin with the raw amino-acid sequence, 214 residues long: ATP phosphoribosyltransferase (214 aa).

The protein belongs to the ATP phosphoribosyltransferase family. Short subfamily. Heteromultimer composed of HisG and HisZ subunits.

The protein localises to the cytoplasm. It carries out the reaction 1-(5-phospho-beta-D-ribosyl)-ATP + diphosphate = 5-phospho-alpha-D-ribose 1-diphosphate + ATP. It functions in the pathway amino-acid biosynthesis; L-histidine biosynthesis; L-histidine from 5-phospho-alpha-D-ribose 1-diphosphate: step 1/9. Its function is as follows. Catalyzes the condensation of ATP and 5-phosphoribose 1-diphosphate to form N'-(5'-phosphoribosyl)-ATP (PR-ATP). Has a crucial role in the pathway because the rate of histidine biosynthesis seems to be controlled primarily by regulation of HisG enzymatic activity. This Lysinibacillus sphaericus (strain C3-41) protein is ATP phosphoribosyltransferase.